The primary structure comprises 2034 residues: Host cell factor 1 (2034 aa).

Residue Ala2 is modified to N-acetylalanine. Position 6 is a phosphoserine (Ser6). Kelch repeat units follow at residues 44–89 (LIVV…GFVC), 93–140 (RLLV…RLGH), 148–194 (KCYL…ITYG), 217–265 (KLVI…TIGN), and 266–313 (KMYV…LMDT). Glycyl lysine isopeptide (Lys-Gly) (interchain with G-Cter in ubiquitin) cross-links involve residues Lys105, Lys163, and Lys244. Lys282 participates in a covalent cross-link: Glycyl lysine isopeptide (Lys-Gly) (interchain with G-Cter in SUMO2). Lys288 carries the N6-acetyllysine modification. Lys363 participates in a covalent cross-link: Glycyl lysine isopeptide (Lys-Gly) (interchain with G-Cter in ubiquitin). Positions 366–469 (PPARVQLVRA…TIQVLPTVPG (104 aa)) constitute a Fibronectin type-III 1 domain. The tract at residues 407–434 (ATATSPTPNPVPSVPANPPKSPAPAAAA) is disordered. Ser411 carries the phosphoserine modification. The span at 413 to 428 (TPNPVPSVPANPPKSP) shows a compositional bias: pro residues. The interval 500–550 (LVTMRPASQAGKAPVTVTSLPASVRMVVPTQSAQGTVIGSNPQMSGMAALA) is required for interaction with OGT. Omega-N-methylarginine is present on residues Arg504 and Arg524. Ser598, Ser666, and Ser669 each carry phosphoserine. The segment at 610 to 722 (LKTAAAQVGT…KGPLPAGTIL (113 aa)) is interaction with SIN3A. Residues 750–902 (ILGISSVSPS…SLAGAGAHST (153 aa)) are interaction with ZBTB17. Lys813 is subject to N6-acetyllysine. The segment at 813 to 912 (KIITAVPKIA…SASLATPITT (100 aa)) is interaction with GABP2. 3 HCF repeat repeats span residues 1010–1035 (TLVC…TVVA), 1072–1097 (VRVC…ATSN), and 1101–1126 (QHGC…AMSS). The HCF repeat 4; degenerate repeat unit spans residues 1156–1182 (RAQGTVKPPCQTQQTNMTSTTMTVQAT). 2 positions are modified to phosphoserine: Ser1204 and Ser1223. Disordered stretches follow at residues 1221-1241 (GPSS…TYTT), 1302-1374 (PCET…TTST), 1444-1477 (TVTS…NITS), and 1491-1525 (RAVT…QLPP). HCF repeat repeat units lie at residues 1295 to 1320 (TQVC…SNAG) and 1323 to 1348 (QRVC…ATSN). Positions 1308-1321 (TGTTNTATTSNAGS) are enriched in low complexity. One copy of the HCF repeat 7; degenerate repeat lies at 1358 to 1383 (QQPASGHPCETHQTTSTGTTMSVSVG). The HCF repeat 8 repeat unit spans residues 1423 to 1448 (QRVCSNPPCETHETGTTHTATTVTSN). Low complexity predominate over residues 1491–1501 (RAVTTVTQSTP). At Thr1500 the chain carries Phosphothreonine. A compositionally biased stretch (pro residues) spans 1502-1511 (VPGPSVPPPE). Phosphoserine is present on residues Ser1506 and Ser1516. Residues 1693–1723 (IVLTQQELAALVQQQQQLQEAQAQAQQQHHL) adopt a coiled-coil conformation. A Phosphoserine modification is found at Ser1782. Fibronectin type-III domains are found at residues 1808–1899 (LPPP…TCLP) and 1901–2017 (FPGA…TSKD). Glycyl lysine isopeptide (Lys-Gly) (interchain with G-Cter in ubiquitin) cross-links involve residues Lys1818 and Lys1819. The residue at position 1849 (Ser1849) is a Phosphoserine. Positions 2005–2034 (ATQVRWLQETSKDSSGTKPASKRPMSSPEM) are disordered. Lys2016 is modified (N6-acetyllysine).

As to quaternary structure, composed predominantly of six polypeptides ranging from 110 to 150 kDa and a minor 300 kDa polypeptide. The majority of N- and C-terminal cleavage products remain tightly, albeit non-covalently, associated. Interacts with POU2F1, CREB3, ZBTB17, EGR2, E2F4, CREBZF, SP1, GABP2, Sin3 HDAC complex (SIN3A, HDAC1, HDAC2, SUDS3), SAP30, SIN3B and FHL2. Component of a MLL1 complex, composed of at least the core components KMT2A/MLL1, ASH2L, HCFC1, WDR5 and RBBP5, as well as the facultative components BACC1, CHD8, DPY30, E2F6, HCFC2, HSP70, INO80C, KANSL1, LAS1L, MAX, MCRS1, MEN1, MGA, KAT8, PELP1, PHF20, PRP31, RING2, RUVBL1, RUVBL2, SENP3, TAF1, TAF4, TAF6, TAF7, TAF9 and TEX10. Component of a THAP1/THAP3-HCFC1-OGT complex that is required for the regulation of the transcriptional activity of RRM1. Interacts directly with THAP3 (via its HBM). Interacts (via the Kelch-repeat domain) with THAP1 (via the HBM); the interaction recruits HCHC1 to the RRM1. Interacts with THAP7 and THAP11 (via the HMB). Interacts directly with OGT; the interaction, which requires the HCFC1 cleavage site domain, glycosylates and promotes the proteolytic processing of HCFC1, retains OGT in the nucleus and impacts the expression of herpes simplex virus immediate early viral genes. Component of the SET1 complex, at least composed of the catalytic subunit (SETD1A or SETD1B), WDR5, WDR82, RBBP5, ASH2L, CXXC1, HCFC1 and DPY30. Component of the NSL complex at least composed of MOF/KAT8, KANSL1, KANSL2, KANSL3, MCRS1, PHF20, OGT1/OGT, WDR5 and HCFC1. Component of a complex at least composed of ZNF335, HCFC1, CCAR2, EMSY, MKI67, RBBP5, ASH2L and WDR5; the complex is formed as a result of interactions between components of a nuclear receptor-mediated transcription complex and a histone methylation complex. Within the complex interacts with ZNF335. Interacts with TET2 and TET3. Interacts with HCFC1R1. Interacts with THAP11. Interacts (via Kelch domain) with KMT2E/MLL5 isoform 3 (via HBM motif). Interacts with E2F1. Accessory scaffold component of the polycomb repressive deubiquitinase (PR-DUB) complex, at least composed of BAP1, one of ASXL1, ASXL2 or (probably) ASXL3 and one of MBD5 or MBD6; the PR-DUB core associates with a number of accessory proteins, including FOXK1, FOXK2, KDM1B, HCFC1, YY1 and OGT. Interacts with YY1 (via Gly-rich region); the interaction is direct. Interacts with BAP1 (via HBM-like motif). Post-translationally, proteolytically cleaved at one or several PPCE--THET sites within the HCF repeats. Further cleavage of the primary N- and C-terminal chains results in a 'trimming' and accumulation of the smaller chains. Cleavage is promoted by O-glycosylation. In terms of processing, O-glycosylated. GlcNAcylation by OGT promotes proteolytic processing. Ubiquitinated. Lys-1818 and Lys-1819 are ubiquitinated both via 'Lys-48'- and 'Lys-63'-linked polyubiquitin chains. BAP1 mediated deubiquitination of 'Lys-48'-linked polyubiquitin chains; deubiquitination by BAP1 does not seem to stabilize the protein.

The protein localises to the cytoplasm. It localises to the nucleus. Its function is as follows. Transcriptional coregulator. Serves as a scaffold protein, bridging interactions between transcription factors, including THAP11 and ZNF143, and transcriptional coregulators. Involved in control of the cell cycle. Also antagonizes transactivation by ZBTB17 and GABP2; represses ZBTB17 activation of the p15(INK4b) promoter and inhibits its ability to recruit p300. Coactivator for EGR2 and GABP2. Tethers the chromatin modifying Set1/Ash2 histone H3 'Lys-4' methyltransferase (H3K4me) and Sin3 histone deacetylase (HDAC) complexes (involved in the activation and repression of transcription, respectively) together. Component of a THAP1/THAP3-HCFC1-OGT complex that is required for the regulation of the transcriptional activity of RRM1. As part of the NSL complex it may be involved in acetylation of nucleosomal histone H4 on several lysine residues. Recruits KMT2E/MLL5 to E2F1 responsive promoters promoting transcriptional activation and thereby facilitates G1 to S phase transition. Modulates expression of homeobox protein PDX1, perhaps acting in concert with transcription factor E2F1, thereby regulating pancreatic beta-cell growth and glucose-stimulated insulin secretion. May negatively modulate transcriptional activity of FOXO3. The polypeptide is Host cell factor 1 (Rattus norvegicus (Rat)).